The chain runs to 128 residues: Large ribosomal subunit protein bL17 (128 aa).

This sequence belongs to the bacterial ribosomal protein bL17 family. Part of the 50S ribosomal subunit. Contacts protein L32.

The polypeptide is Large ribosomal subunit protein bL17 (Enterobacter sp. (strain 638)).